The primary structure comprises 87 residues: Neutrophil antibiotic peptide NP-3B (87 aa).

An N-terminal signal peptide occupies residues methionine 1–alanine 19. A propeptide spanning residues glutamate 20–threonine 58 is cleaved from the precursor. 3 cysteine pairs are disulfide-bonded: cysteine 59/cysteine 87, cysteine 61/cysteine 76, and cysteine 66/cysteine 86.

It belongs to the alpha-defensin family.

It localises to the secreted. Functionally, active in vitro against S.aureus, fungi, Gram-positive and Gram-negative bacteria and to a lesser extent against an enveloped virus. This chain is Neutrophil antibiotic peptide NP-3B, found in Rattus norvegicus (Rat).